The chain runs to 86 residues: Co-chaperonin GroES (86 aa).

It belongs to the GroES chaperonin family. Heptamer of 7 subunits arranged in a ring. Interacts with the chaperonin GroEL.

It is found in the cytoplasm. Functionally, together with the chaperonin GroEL, plays an essential role in assisting protein folding. The GroEL-GroES system forms a nano-cage that allows encapsulation of the non-native substrate proteins and provides a physical environment optimized to promote and accelerate protein folding. GroES binds to the apical surface of the GroEL ring, thereby capping the opening of the GroEL channel. This chain is Co-chaperonin GroES, found in Campylobacter curvus (strain 525.92).